Reading from the N-terminus, the 300-residue chain is uncharacterized protein (300 aa).

An HTH lysR-type domain is found at Phe-10–Thr-67. A DNA-binding region (H-T-H motif) is located at residues Ile-27–Gln-46.

This sequence belongs to the LysR transcriptional regulatory family.

This is an uncharacterized protein from Escherichia coli (strain K12).